The sequence spans 72 residues: MFTMKKSLLLLFFLGTVSLSLCEQERGADEDDGGEMTEELKRGVITDALKGAAKTVAAELLRKAHCKLTNSC.

An N-terminal signal peptide occupies residues 1 to 22 (MFTMKKSLLLLFFLGTVSLSLC). A propeptide spanning residues 23–42 (EQERGADEDDGGEMTEELKR) is cleaved from the precursor. Cys-66 and Cys-72 are disulfide-bonded.

As to expression, expressed by the skin glands.

The protein localises to the secreted. Functionally, antimicrobial peptide. Active against the Gram-positive bacteria S.aureus FDA209P (MIC=16.5 ug/ml) and B.subtilis ATCC 6633 (MIC&gt;64 ug/ml), and the Gram-negative bacteria E.coli O111 (MIC=8.2 ug/ml) and E.coli ATCC 25922 (MIC=8.2 ug/ml). Not active against the fungus C.albicans. This Sylvirana guentheri (Gunther's frog) protein is Brevinin-2GHb.